Reading from the N-terminus, the 119-residue chain is Holo-[acyl-carrier-protein] synthase (119 aa).

Residues D8 and E59 each coordinate Mg(2+).

It belongs to the P-Pant transferase superfamily. AcpS family. It depends on Mg(2+) as a cofactor.

It localises to the cytoplasm. It carries out the reaction apo-[ACP] + CoA = holo-[ACP] + adenosine 3',5'-bisphosphate + H(+). In terms of biological role, transfers the 4'-phosphopantetheine moiety from coenzyme A to a Ser of acyl-carrier-protein. The protein is Holo-[acyl-carrier-protein] synthase of Streptococcus agalactiae serotype Ia (strain ATCC 27591 / A909 / CDC SS700).